A 155-amino-acid polypeptide reads, in one-letter code: MPIKLNASFSDSYVDVSQYRDQHFKGNRYEQEKLLKQSNTLYVGNLSFYTTEEQVYELFSKSGDVKRIIIGLDKVKKTACGFCFVEYYTRADAENAMRFVNGTRLDDRIIRTDWDAGFKEGRQYGRGKSGGQVRDEYRQDYDPARGGYGKVVARP.

MRNA-binding positions include Y19, Y42, 111–115 (RTDWD), 122–126 (RQYGR), and 132–133 (QV). One can recognise an RRM domain in the interval 39 to 117 (NTLYVGNLSF…RIIRTDWDAG (79 aa)). The disordered stretch occupies residues 122 to 155 (RQYGRGKSGGQVRDEYRQDYDPARGGYGKVVARP). The segment covering 133–143 (VRDEYRQDYDP) has biased composition (basic and acidic residues).

The protein belongs to the RRM NCBP2 family. Component of the nuclear cap-binding complex (CBC), a heterodimer composed of ncbp1/cbp80 and ncbp2/cbp20 that interacts with m7GpppG-capped RNA.

It is found in the nucleus. It localises to the cytoplasm. Functionally, component of the cap-binding complex (CBC), which binds co-transcriptionally to the 5' cap of pre-mRNAs and is involved in various processes such as pre-mRNA splicing, translation regulation, nonsense-mediated mRNA decay, RNA-mediated gene silencing (RNAi) by microRNAs (miRNAs) and mRNA export. The CBC complex is involved in mRNA export from the nucleus, leading to the recruitment of the mRNA export machinery to the 5' end of mRNA and to mRNA export in a 5' to 3' direction through the nuclear pore. The CBC complex is also involved in mediating U snRNA and intronless mRNAs export from the nucleus. The CBC complex is essential for a pioneer round of mRNA translation, before steady state translation when the CBC complex is replaced by cytoplasmic cap-binding protein eIF4E. The pioneer round of mRNA translation mediated by the CBC complex plays a central role in nonsense-mediated mRNA decay (NMD), NMD only taking place in mRNAs bound to the CBC complex, but not on eIF4E-bound mRNAs. The CBC complex enhances NMD in mRNAs containing at least one exon-junction complex (EJC), promoting the interaction between upf1 and upf2. The CBC complex is also involved in 'failsafe' NMD, which is independent of the EJC complex, while it does not participate in Staufen-mediated mRNA decay (SMD). During cell proliferation, the CBC complex is also involved in microRNAs (miRNAs) biogenesis via its interaction with srrt/ars2, thereby being required for miRNA-mediated RNA interference. The CBC complex also acts as a negative regulator of parn, thereby acting as an inhibitor of mRNA deadenylation. In the CBC complex, ncbp2/cbp20 recognizes and binds capped RNAs (m7GpppG-capped RNA) but requires ncbp1/cbp80 to stabilize the movement of its N-terminal loop and lock the CBC into a high affinity cap-binding state with the cap structure. The conventional cap-binding complex with NCBP2 binds both small nuclear RNA (snRNA) and messenger (mRNA) and is involved in their export from the nucleus. The sequence is that of Nuclear cap-binding protein subunit 2 (ncbp2) from Esox lucius (Northern pike).